The primary structure comprises 346 residues: KH domain-containing, RNA-binding, signal transduction-associated protein 3 (346 aa).

The interval 1-160 (MEEKYLPELM…IKKFLIPDYN (160 aa)) is involved in homodimerization. A Glycyl lysine isopeptide (Lys-Gly) (interchain with G-Cter in SUMO2) cross-link involves residue Lys4. One can recognise a KH domain in the interval 61-127 (LIPVKQFPKF…AKYFHLNDDL (67 aa)). Residues 212–251 (RPVGVVVPRGTPTPRGVLSTRGPVSRGRGLLTPRARGVPP) are interaction with SIAH1. Over residues 213 to 228 (PVGVVVPRGTPTPRGV) the composition is skewed to low complexity. Disordered regions lie at residues 213 to 267 (PVGV…ETYG) and 318 to 346 (QEEWTNSRHKAPSARTAKGVYRDQPYGRY). Residues 253–262 (GYRPPPPPPT) are compositionally biased toward pro residues.

Belongs to the KHDRBS family. As to quaternary structure, self-associates to form homooligomers; dimerization increases RNA affinity. Interacts with KHDRBS2/SLM-1. Interacts with KHDRBS1/SAM68; heterooligomer formation of KHDRBS family proteins may modulate RNA substrate specificity. Interacts with the splicing regulatory proteins SFRS9, SAFB and YTHDC1. Interacts with HNRPL. Interacts with RBMX, RBMY1A1, p85 subunit of PI3-kinase, SERPINB5. Interacts with SIAH1 which promotes targeting for degradation. In terms of processing, phosphorylated on tyrosine residues. Isoform 1 C-terminal region is tyrosine-rich, but isoform 2 lacking this C-terminal region is also tyrosine-phosphorylated. In terms of tissue distribution, ubiquitous with higher expression in testis, skeletal muscle and brain. Expressed in the kidney only in podocytes, the glomerular epithelial cells of the kidney. Strongly expressed after meiosis.

It is found in the nucleus. In terms of biological role, RNA-binding protein that plays a role in the regulation of alternative splicing and influences mRNA splice site selection and exon inclusion. Binds preferentially to the 5'-[AU]UAAA-3' motif in vitro. Binds optimally to RNA containing 5'-[AU]UAA-3' as a bipartite motif spaced by more than 15 nucleotides. Binds poly(A). RNA-binding abilities are down-regulated by tyrosine kinase PTK6. Involved in splice site selection of vascular endothelial growth factor. In vitro regulates CD44 alternative splicing by direct binding to purine-rich exonic enhancer. Can regulate alternative splicing of neurexins NRXN1-3 in the laminin G-like domain 6 containing the evolutionary conserved neurexin alternative spliced segment 4 (AS4) involved in neurexin selective targeting to postsynaptic partners such as neuroligins and LRRTM family members. Targeted, cell-type specific splicing regulation of NRXN1 at AS4 is involved in neuronal glutamatergic synapse function and plasticity. May regulate expression of KHDRBS2/SLIM-1 in defined brain neuron populations by modifying its alternative splicing. Can bind FABP9 mRNA. May play a role as a negative regulator of cell growth. Inhibits cell proliferation. Functionally, (Microbial infection) Involved in post-transcriptional regulation of HIV-1 gene expression. The polypeptide is KH domain-containing, RNA-binding, signal transduction-associated protein 3 (KHDRBS3) (Homo sapiens (Human)).